Reading from the N-terminus, the 133-residue chain is Large ribosomal subunit protein uL22 (133 aa).

It belongs to the universal ribosomal protein uL22 family. Part of the 50S ribosomal subunit.

This protein binds specifically to 23S rRNA; its binding is stimulated by other ribosomal proteins, e.g. L4, L17, and L20. It is important during the early stages of 50S assembly. It makes multiple contacts with different domains of the 23S rRNA in the assembled 50S subunit and ribosome. Functionally, the globular domain of the protein is located near the polypeptide exit tunnel on the outside of the subunit, while an extended beta-hairpin is found that lines the wall of the exit tunnel in the center of the 70S ribosome. The sequence is that of Large ribosomal subunit protein uL22 from Aquifex pyrophilus.